The chain runs to 84 residues: Cytochrome b559 subunit alpha (84 aa).

The helical transmembrane segment at 22–36 threads the bilayer; it reads IIHSITIPSLFVSGW. A heme-binding site is contributed by His-24.

This sequence belongs to the PsbE/PsbF family. In terms of assembly, heterodimer of an alpha subunit and a beta subunit. PSII is composed of 1 copy each of membrane proteins PsbA, PsbB, PsbC, PsbD, PsbE, PsbF, PsbH, PsbI, PsbJ, PsbK, PsbL, PsbM, PsbT, PsbX, PsbY, PsbZ, Psb30/Ycf12, at least 3 peripheral proteins of the oxygen-evolving complex and a large number of cofactors. It forms dimeric complexes. The cofactor is heme b.

The protein localises to the plastid. It is found in the chloroplast thylakoid membrane. In terms of biological role, this b-type cytochrome is tightly associated with the reaction center of photosystem II (PSII). PSII is a light-driven water:plastoquinone oxidoreductase that uses light energy to abstract electrons from H(2)O, generating O(2) and a proton gradient subsequently used for ATP formation. It consists of a core antenna complex that captures photons, and an electron transfer chain that converts photonic excitation into a charge separation. This Phaeodactylum tricornutum (strain CCAP 1055/1) protein is Cytochrome b559 subunit alpha.